A 693-amino-acid polypeptide reads, in one-letter code: Elongation factor G (693 aa).

Positions 8–283 (NRIRNIGIAA…AVIDYLPAPT (276 aa)) constitute a tr-type G domain. GTP-binding positions include 17-24 (AHIDAGKT), 81-85 (DTPGH), and 135-138 (NKMD).

Belongs to the TRAFAC class translation factor GTPase superfamily. Classic translation factor GTPase family. EF-G/EF-2 subfamily.

It is found in the cytoplasm. Catalyzes the GTP-dependent ribosomal translocation step during translation elongation. During this step, the ribosome changes from the pre-translocational (PRE) to the post-translocational (POST) state as the newly formed A-site-bound peptidyl-tRNA and P-site-bound deacylated tRNA move to the P and E sites, respectively. Catalyzes the coordinated movement of the two tRNA molecules, the mRNA and conformational changes in the ribosome. The protein is Elongation factor G of Wolinella succinogenes (strain ATCC 29543 / DSM 1740 / CCUG 13145 / JCM 31913 / LMG 7466 / NCTC 11488 / FDC 602W) (Vibrio succinogenes).